Consider the following 99-residue polypeptide: Integration host factor subunit beta (99 aa).

Belongs to the bacterial histone-like protein family. Heterodimer of an alpha and a beta chain.

Its function is as follows. This protein is one of the two subunits of integration host factor, a specific DNA-binding protein that functions in genetic recombination as well as in transcriptional and translational control. This chain is Integration host factor subunit beta, found in Laribacter hongkongensis (strain HLHK9).